The following is a 157-amino-acid chain: 3-dehydroquinate dehydratase (157 aa).

The active-site Proton acceptor is the tyrosine 24. Asparagine 75, histidine 81, and aspartate 88 together coordinate substrate. Histidine 101 functions as the Proton donor in the catalytic mechanism. Substrate is bound by residues 102–103 (LS) and arginine 112.

It belongs to the type-II 3-dehydroquinase family. As to quaternary structure, homododecamer.

It carries out the reaction 3-dehydroquinate = 3-dehydroshikimate + H2O. Its pathway is metabolic intermediate biosynthesis; chorismate biosynthesis; chorismate from D-erythrose 4-phosphate and phosphoenolpyruvate: step 3/7. Its function is as follows. Catalyzes a trans-dehydration via an enolate intermediate. In Brucella canis (strain ATCC 23365 / NCTC 10854 / RM-666), this protein is 3-dehydroquinate dehydratase.